Reading from the N-terminus, the 215-residue chain is Polysialic acid O-acetyltransferase (215 aa).

Acetyl-CoA is bound by residues 119–121 (DMH), arginine 148, lysine 154, serine 166, 171–172 (YK), and lysine 190.

Belongs to the transferase hexapeptide repeat family. As to quaternary structure, homotrimer.

It carries out the reaction [(2-&gt;6)-alpha-D-glucosyl-(1-&gt;4)-N-acetyl-alpha-D-neuraminosyl](n) + n acetyl-CoA = [(2-&gt;6)-alpha-D-glucosyl-(1-&gt;4)-N,7-O-diacetyl-alpha-D-neuraminosyl](n) + n CoA. It catalyses the reaction [(2-&gt;6)-alpha-D-glucosyl-(1-&gt;4)-N-acetyl-alpha-D-neuraminosyl](n) + n acetyl-CoA = [(2-&gt;6)-alpha-D-glucosyl-(1-&gt;4)-N,O(9)-diacetyl-alpha-D-neuraminosyl](n) + n CoA. Catalyzes the O-acetylation of capsular polymeric sialic acid consisting of polymers of (2-&gt;6)-alpha-D-glucosyl-(1-&gt;4)-N-acetyl-alpha-D-neuraminosyl residues. Shows high substrate specificity toward polymers of sialic acid that contains a large number of residues. The polypeptide is Polysialic acid O-acetyltransferase (Neisseria meningitidis).